The sequence spans 905 residues: Alanine--tRNA ligase (905 aa).

Residues His582, His586, Cys687, and His691 each coordinate Zn(2+).

This sequence belongs to the class-II aminoacyl-tRNA synthetase family. Zn(2+) is required as a cofactor.

It localises to the cytoplasm. The catalysed reaction is tRNA(Ala) + L-alanine + ATP = L-alanyl-tRNA(Ala) + AMP + diphosphate. In terms of biological role, catalyzes the attachment of alanine to tRNA(Ala) in a two-step reaction: alanine is first activated by ATP to form Ala-AMP and then transferred to the acceptor end of tRNA(Ala). Also edits incorrectly charged Ser-tRNA(Ala) and Gly-tRNA(Ala) via its editing domain. This is Alanine--tRNA ligase from Mycoplasma mobile (strain ATCC 43663 / 163K / NCTC 11711) (Mesomycoplasma mobile).